The chain runs to 273 residues: NH(3)-dependent NAD(+) synthetase (273 aa).

47–54 (GISGGQDS) provides a ligand contact to ATP. Aspartate 53 contacts Mg(2+). Arginine 139 provides a ligand contact to deamido-NAD(+). ATP is bound at residue threonine 159. Glutamate 164 contacts Mg(2+). Lysine 172 and aspartate 179 together coordinate deamido-NAD(+). The ATP site is built by lysine 188 and threonine 210. 259 to 260 (HK) contacts deamido-NAD(+).

This sequence belongs to the NAD synthetase family. As to quaternary structure, homodimer.

It carries out the reaction deamido-NAD(+) + NH4(+) + ATP = AMP + diphosphate + NAD(+) + H(+). Its pathway is cofactor biosynthesis; NAD(+) biosynthesis; NAD(+) from deamido-NAD(+) (ammonia route): step 1/1. Catalyzes the ATP-dependent amidation of deamido-NAD to form NAD. Uses ammonia as a nitrogen source. This Staphylococcus aureus (strain bovine RF122 / ET3-1) protein is NH(3)-dependent NAD(+) synthetase.